The primary structure comprises 286 residues: Pantothenate synthetase (286 aa).

30-37 (MGNLHAGH) is an ATP binding site. The active-site Proton donor is H37. Q61 contributes to the (R)-pantoate binding site. Q61 is a beta-alanine binding site. Position 149 to 152 (149 to 152 (GEKD)) interacts with ATP. Position 155 (Q155) interacts with (R)-pantoate. ATP-binding positions include V178 and 186-189 (MSSR).

It belongs to the pantothenate synthetase family. In terms of assembly, homodimer.

It localises to the cytoplasm. It carries out the reaction (R)-pantoate + beta-alanine + ATP = (R)-pantothenate + AMP + diphosphate + H(+). It participates in cofactor biosynthesis; (R)-pantothenate biosynthesis; (R)-pantothenate from (R)-pantoate and beta-alanine: step 1/1. Its function is as follows. Catalyzes the condensation of pantoate with beta-alanine in an ATP-dependent reaction via a pantoyl-adenylate intermediate. The polypeptide is Pantothenate synthetase (Thioalkalivibrio sulfidiphilus (strain HL-EbGR7)).